The primary structure comprises 156 residues: Small ribosomal subunit protein uS7 (156 aa).

Belongs to the universal ribosomal protein uS7 family. Part of the 30S ribosomal subunit. Contacts proteins S9 and S11.

Its function is as follows. One of the primary rRNA binding proteins, it binds directly to 16S rRNA where it nucleates assembly of the head domain of the 30S subunit. Is located at the subunit interface close to the decoding center, probably blocks exit of the E-site tRNA. The chain is Small ribosomal subunit protein uS7 from Lactobacillus acidophilus (strain ATCC 700396 / NCK56 / N2 / NCFM).